A 544-amino-acid chain; its full sequence is uncharacterized protein (544 aa).

14 helical membrane passes run 31 to 51 (ILVFYLLFFLTDVAGIPAALA), 52 to 72 (GSVLMIGKIFDAINDPIIGLL), 84 to 104 (LPWMLGGMIPFALFYTAQWLI), 116 to 136 (WGLFIYYVAIAMAFNLCYTTV), 162 to 182 (FAFSIGGSILSLILYILIAAG), 191 to 211 (FGELGVMISVLSISALLWSAL), 230 to 250 (LAPLLMAAGITLILLAIAKSF), 257 to 277 (GFDYISFFLILLGLIWGGFGF), 318 to 338 (FLFVIGIYLCSWLAVQLTASI), 356 to 376 (TIALAVQGTALVMLFVWQALA), 383 to 403 (VIYFLGSMVWMGAEAGLWLVQ), 407 to 427 (VALLYTLAIFAGVGVSVAYLI), 450 to 470 (FFYAFMVLLQKVGLALGLFLV), and 501 to 521 (FAVAPLPAFFLLGGLILAIFY).

Belongs to the sodium:galactoside symporter (TC 2.A.2) family.

It is found in the cell membrane. This is an uncharacterized protein from Synechocystis sp. (strain ATCC 27184 / PCC 6803 / Kazusa).